Reading from the N-terminus, the 154-residue chain is Large ribosomal subunit protein uL15 (154 aa).

The interval 1-54 (MKLHDLTPAPGSRKPKKRVGRGPGGTDKTAGRGHKGQKSRSGAGKGPFFEGGRS) is disordered.

Belongs to the universal ribosomal protein uL15 family. As to quaternary structure, part of the 50S ribosomal subunit.

Binds to the 23S rRNA. The protein is Large ribosomal subunit protein uL15 of Deinococcus geothermalis (strain DSM 11300 / CIP 105573 / AG-3a).